We begin with the raw amino-acid sequence, 209 residues long: Uracil phosphoribosyltransferase (209 aa).

5-phospho-alpha-D-ribose 1-diphosphate contacts are provided by residues R79, R104, and 131–139 (DPMLATGGS). Uracil-binding positions include I194 and 199–201 (GDA). A 5-phospho-alpha-D-ribose 1-diphosphate-binding site is contributed by D200.

It belongs to the UPRTase family. Mg(2+) is required as a cofactor.

The catalysed reaction is UMP + diphosphate = 5-phospho-alpha-D-ribose 1-diphosphate + uracil. It participates in pyrimidine metabolism; UMP biosynthesis via salvage pathway; UMP from uracil: step 1/1. With respect to regulation, allosterically activated by GTP. Catalyzes the conversion of uracil and 5-phospho-alpha-D-ribose 1-diphosphate (PRPP) to UMP and diphosphate. The protein is Uracil phosphoribosyltransferase of Streptococcus salivarius.